The sequence spans 510 residues: 2,3-bisphosphoglycerate-independent phosphoglycerate mutase (510 aa).

Asp12 contacts Mn(2+). At Tyr36 the chain carries Phosphotyrosine. Ser62 serves as a coordination point for Mn(2+). Ser62 serves as the catalytic Phosphoserine intermediate. Substrate is bound by residues His123, 153–154 (RD), Arg185, Arg191, 261–264 (RPDR), and Lys336. Asp403, His407, Asp444, His445, and His462 together coordinate Mn(2+).

It belongs to the BPG-independent phosphoglycerate mutase family. Monomer. It depends on Mn(2+) as a cofactor.

It catalyses the reaction (2R)-2-phosphoglycerate = (2R)-3-phosphoglycerate. It functions in the pathway carbohydrate degradation; glycolysis; pyruvate from D-glyceraldehyde 3-phosphate: step 3/5. Functionally, essential for rapid growth and for sporulation. Catalyzes the interconversion of 2-phosphoglycerate and 3-phosphoglycerate. In Shouchella clausii (strain KSM-K16) (Alkalihalobacillus clausii), this protein is 2,3-bisphosphoglycerate-independent phosphoglycerate mutase.